Here is a 395-residue protein sequence, read N- to C-terminus: Phosphoglycerate kinase (395 aa).

Residues 21–23 (DFN), Arg-36, 59–62 (HLGR), Arg-120, and Arg-153 each bind substrate. Residues Lys-203, Gly-294, Glu-325, and 351–354 (GGDS) contribute to the ATP site.

Belongs to the phosphoglycerate kinase family. As to quaternary structure, monomer.

It is found in the cytoplasm. It catalyses the reaction (2R)-3-phosphoglycerate + ATP = (2R)-3-phospho-glyceroyl phosphate + ADP. It participates in carbohydrate degradation; glycolysis; pyruvate from D-glyceraldehyde 3-phosphate: step 2/5. The chain is Phosphoglycerate kinase from Finegoldia magna (strain ATCC 29328 / DSM 20472 / WAL 2508) (Peptostreptococcus magnus).